The primary structure comprises 488 residues: Centrosomal protein cep57l1 (488 aa).

Residues L71–N226 are a coiled coil. 2 disordered regions span residues S232–K272 and P311–S342. The span at R241 to K250 shows a compositional bias: basic residues. Basic and acidic residues-rich tracts occupy residues P259–P270 and S314–P325. Residues K377–I403 are a coiled coil. The disordered stretch occupies residues L416–A464. Polar residues predominate over residues N452 to A464.

The protein belongs to the translokin family. In terms of assembly, interacts with clip1, mis12, ndc80 and zwint. Interacts with gamma-tubulin.

Its subcellular location is the cytoplasm. It is found in the cytoskeleton. It localises to the microtubule organizing center. The protein localises to the centrosome. The protein resides in the chromosome. Its subcellular location is the centromere. It is found in the kinetochore. It localises to the spindle. Its function is as follows. Required for spindle microtubule attachment to both kinetochores and centrosomes. Also functions to tether minus-ends of spindle microtubules to centrosomes. May act by forming ring-like structures around microtubules, or by serving as a cross-linker or scaffold at the attachment site. In Xenopus laevis (African clawed frog), this protein is Centrosomal protein cep57l1 (cep57l1).